The chain runs to 303 residues: Putative F-box protein At5g62060 (303 aa).

Residues 27-74 (KSRYIDIPLDITVEILKKLPAKSLVRFQCVSKQWSTIIGSRRDFIDSI) form the F-box domain.

In Arabidopsis thaliana (Mouse-ear cress), this protein is Putative F-box protein At5g62060.